The following is a 99-amino-acid chain: DNA-directed RNA polymerase subunit omega (99 aa).

It belongs to the RNA polymerase subunit omega family. In terms of assembly, the RNAP catalytic core consists of 2 alpha, 1 beta, 1 beta' and 1 omega subunit. When a sigma factor is associated with the core the holoenzyme is formed, which can initiate transcription.

It carries out the reaction RNA(n) + a ribonucleoside 5'-triphosphate = RNA(n+1) + diphosphate. Its function is as follows. Promotes RNA polymerase assembly. Latches the N- and C-terminal regions of the beta' subunit thereby facilitating its interaction with the beta and alpha subunits. The polypeptide is DNA-directed RNA polymerase subunit omega (Stenotrophomonas maltophilia (strain K279a)).